Consider the following 162-residue polypeptide: Nucleotide-binding protein CHU_2278 (162 aa).

It belongs to the YajQ family.

In terms of biological role, nucleotide-binding protein. The polypeptide is Nucleotide-binding protein CHU_2278 (Cytophaga hutchinsonii (strain ATCC 33406 / DSM 1761 / CIP 103989 / NBRC 15051 / NCIMB 9469 / D465)).